The primary structure comprises 294 residues: MPWLQLKVIAPRRYVESIENALLAAGAASVTLQDNADQPIFEPGLGETPLWDNVKITGLFDAEIDTAKAIALAERRFGNPLPQHQWEQLEDKDWEREWMSNYHAIRCGERLWICPSWQEPPEPDKINLMLDPGLAFGTGTHPTTFLCMQWIDQQDFTDLEVIDYGCGSGILGIAALLLGARKVVGVDIDPQALLATTENAKRNQLPADAMPVYLPPHCPATQVDVMLANILAGPLAELAPTLSNMTKPGGKLCLSGILSVQAQSVMDAYAPWFDFDPVATHEEWVRLTAIKARA.

Residues threonine 144, glycine 165, aspartate 187, and asparagine 229 each contribute to the S-adenosyl-L-methionine site.

The protein belongs to the methyltransferase superfamily. PrmA family.

The protein localises to the cytoplasm. The catalysed reaction is L-lysyl-[protein] + 3 S-adenosyl-L-methionine = N(6),N(6),N(6)-trimethyl-L-lysyl-[protein] + 3 S-adenosyl-L-homocysteine + 3 H(+). Methylates ribosomal protein L11. The chain is Ribosomal protein L11 methyltransferase from Cellvibrio japonicus (strain Ueda107) (Pseudomonas fluorescens subsp. cellulosa).